The primary structure comprises 640 residues: Glycosyltransferase-like protein gnt14 (640 aa).

Over 1-14 (MFGFKTTKNKKRVR) the chain is Cytoplasmic. A helical; Signal-anchor for type II membrane protein transmembrane segment spans residues 15-35 (LLVVAIGVMIFFMCLSNFSSI). At 36–640 (QSRQSSSTDT…TENCYSNDHW (605 aa)) the chain is on the extracellular side. Disordered stretches follow at residues 63–184 (PSIN…PLSS) and 254–277 (NSNN…NNNY). Positions 65–171 (ININNSENNI…NININNNNKP (107 aa)) are enriched in low complexity. The N-linked (GlcNAc...) asparagine glycan is linked to asparagine 68. N-linked (GlcNAc...) asparagine glycosylation is found at asparagine 410 and asparagine 539.

It belongs to the glycosyltransferase 8 family. Highly divergent.

Its subcellular location is the membrane. This Dictyostelium discoideum (Social amoeba) protein is Glycosyltransferase-like protein gnt14 (gnt14).